Consider the following 248-residue polypeptide: 3-deoxy-manno-octulosonate cytidylyltransferase (248 aa).

The protein belongs to the KdsB family.

It localises to the cytoplasm. It catalyses the reaction 3-deoxy-alpha-D-manno-oct-2-ulosonate + CTP = CMP-3-deoxy-beta-D-manno-octulosonate + diphosphate. It participates in nucleotide-sugar biosynthesis; CMP-3-deoxy-D-manno-octulosonate biosynthesis; CMP-3-deoxy-D-manno-octulosonate from 3-deoxy-D-manno-octulosonate and CTP: step 1/1. Its pathway is bacterial outer membrane biogenesis; lipopolysaccharide biosynthesis. In terms of biological role, activates KDO (a required 8-carbon sugar) for incorporation into bacterial lipopolysaccharide in Gram-negative bacteria. This chain is 3-deoxy-manno-octulosonate cytidylyltransferase, found in Salmonella enteritidis PT4 (strain P125109).